Reading from the N-terminus, the 188-residue chain is Mediator of RNA polymerase II transcription subunit 29 (188 aa).

Residues 1–11 (MAMLLNQSQPP) show a composition bias toward polar residues. The segment at 1–27 (MAMLLNQSQPPQGREGGGTQVGSLGPG) is disordered.

The protein belongs to the Mediator complex subunit 29 family. As to quaternary structure, component of the Mediator complex.

Its subcellular location is the nucleus. Component of the Mediator complex, a coactivator involved in the regulated transcription of nearly all RNA polymerase II-dependent genes. Mediator functions as a bridge to convey information from gene-specific regulatory proteins to the basal RNA polymerase II transcription machinery. Mediator is recruited to promoters by direct interactions with regulatory proteins and serves as a scaffold for the assembly of a functional preinitiation complex with RNA polymerase II and the general transcription factors. The polypeptide is Mediator of RNA polymerase II transcription subunit 29 (med29) (Xenopus tropicalis (Western clawed frog)).